The chain runs to 677 residues: Methionine--tRNA ligase (677 aa).

Positions P15–H25 match the 'HIGH' region motif. C146, C149, C159, and C162 together coordinate Zn(2+). Residues K333–S337 carry the 'KMSKS' region motif. K336 is an ATP binding site. Residues D575–K677 form the tRNA-binding domain.

This sequence belongs to the class-I aminoacyl-tRNA synthetase family. MetG type 1 subfamily. In terms of assembly, homodimer. Zn(2+) serves as cofactor.

It is found in the cytoplasm. It carries out the reaction tRNA(Met) + L-methionine + ATP = L-methionyl-tRNA(Met) + AMP + diphosphate. Is required not only for elongation of protein synthesis but also for the initiation of all mRNA translation through initiator tRNA(fMet) aminoacylation. In Escherichia coli O17:K52:H18 (strain UMN026 / ExPEC), this protein is Methionine--tRNA ligase.